Reading from the N-terminus, the 1465-residue chain is DNA polymerase III PolC-type (1465 aa).

The region spanning 425 to 581 (YVVFDVETTG…YDAEATGRLL (157 aa)) is the Exonuclease domain.

Belongs to the DNA polymerase type-C family. PolC subfamily.

The protein localises to the cytoplasm. The enzyme catalyses DNA(n) + a 2'-deoxyribonucleoside 5'-triphosphate = DNA(n+1) + diphosphate. Functionally, required for replicative DNA synthesis. This DNA polymerase also exhibits 3' to 5' exonuclease activity. This chain is DNA polymerase III PolC-type, found in Streptococcus mutans serotype c (strain ATCC 700610 / UA159).